The primary structure comprises 123 residues: Fluoride-specific ion channel FluC (123 aa).

The next 4 membrane-spanning stretches (helical) occupy residues 5–25 (LIIG…SGII), 29–49 (FGIP…VGFV), 65–85 (LIIT…YETF), and 94–114 (IKFL…IYVG). Na(+)-binding residues include G72 and T75.

It belongs to the fluoride channel Fluc/FEX (TC 1.A.43) family.

The protein resides in the cell membrane. The catalysed reaction is fluoride(in) = fluoride(out). Na(+) is not transported, but it plays an essential structural role and its presence is essential for fluoride channel function. Fluoride-specific ion channel. Important for reducing fluoride concentration in the cell, thus reducing its toxicity. This is Fluoride-specific ion channel FluC from Methanococcus aeolicus (strain ATCC BAA-1280 / DSM 17508 / OCM 812 / Nankai-3).